The primary structure comprises 997 residues: Mannuronan C5-epimerase AlgE2 (997 aa).

7 PbH1 repeats span residues 133-155 (DRDVTLERVEIREMSGYGFDPHE), 157-179 (TINLTIRDSVAHDNGLDGFVADF), 180-202 (QIGGVFENNVSYNNDRHGFNIVT), 204-226 (TNDFVLSNNVAYGNGGAGLVVQR), 257-279 (AHDVTLQNAEIYGNGLYGVRVYG), 280-315 (AEDVQILDNYIHDNSQNGSYAEILLQSYDDTAGVSG), and 320-359 (TTGTWIEGNTIVGSANSTYGIQERDDGTDYSSLYANSVSN). 10 Hemolysin-type calcium-binding repeats span residues 388–403 (GTAGNDTLGGSDAHET), 406–422 (GLDGNDRLNGGAGNDIL), 424–439 (GGAGRDNLTGGAGADL), 557–573 (GHAGNDTLDGGAGDDIL), 574–591 (VGGAGRDSLTGGAGADVF), 696–711 (GSAGNDSLQGTAADEV), 713–730 (HGGGGRDTLAGGAGADVF), 828–839 (GGDGNDTLSGSS), 846–862 (GGVGNDSLDGGAGNDIL), and 864–880 (GGAGRDTLSGGSGSDIF).

It belongs to the D-mannuronate C5-epimerase family. Ca(2+) is required as a cofactor.

The protein localises to the secreted. It catalyses the reaction [(1-&gt;4)-beta-D-mannuronosyl](n) = [alginate](n). The protein operates within glycan biosynthesis; alginate biosynthesis. Inhibited by zinc. In terms of biological role, converts beta-D-mannuronic acid (M) to alpha-L-guluronic acid (G), producing a polymer with gel-forming capacity, required for the formation of the cyst coat. This Azotobacter vinelandii protein is Mannuronan C5-epimerase AlgE2.